Consider the following 99-residue polypeptide: (4S)-4-hydroxy-5-phosphonooxypentane-2,3-dione isomerase (99 aa).

In terms of domain architecture, ABM spans 2–91 (HVTLVEINVK…ISEPRKKRSF (90 aa)).

Belongs to the LsrG family. As to quaternary structure, homodimer.

Its subcellular location is the cytoplasm. It catalyses the reaction (2S)-2-hydroxy-3,4-dioxopentyl phosphate = 3-hydroxy-2,4-dioxopentyl phosphate. Functionally, involved in the degradation of phospho-AI-2, thereby terminating induction of the lsr operon and closing the AI-2 signaling cycle. Catalyzes the conversion of (4S)-4-hydroxy-5-phosphonooxypentane-2,3-dione (P-DPD) to 3-hydroxy-5-phosphonooxypentane-2,4-dione (P-HPD). The chain is (4S)-4-hydroxy-5-phosphonooxypentane-2,3-dione isomerase from Photorhabdus laumondii subsp. laumondii (strain DSM 15139 / CIP 105565 / TT01) (Photorhabdus luminescens subsp. laumondii).